The primary structure comprises 408 residues: LL-diaminopimelate aminotransferase (408 aa).

Substrate-binding residues include Y15 and G42. Pyridoxal 5'-phosphate-binding positions include Y72, 108 to 109 (SK), Y132, N187, Y218, and 246 to 248 (SFS). Substrate contacts are provided by K109, Y132, and N187. K249 is subject to N6-(pyridoxal phosphate)lysine. Pyridoxal 5'-phosphate-binding residues include R257 and N291. Substrate contacts are provided by N291 and R387.

Belongs to the class-I pyridoxal-phosphate-dependent aminotransferase family. LL-diaminopimelate aminotransferase subfamily. As to quaternary structure, homodimer. Pyridoxal 5'-phosphate serves as cofactor.

It carries out the reaction (2S,6S)-2,6-diaminopimelate + 2-oxoglutarate = (S)-2,3,4,5-tetrahydrodipicolinate + L-glutamate + H2O + H(+). It participates in amino-acid biosynthesis; L-lysine biosynthesis via DAP pathway; LL-2,6-diaminopimelate from (S)-tetrahydrodipicolinate (aminotransferase route): step 1/1. Involved in the synthesis of meso-diaminopimelate (m-DAP or DL-DAP), required for both lysine and peptidoglycan biosynthesis. Catalyzes the direct conversion of tetrahydrodipicolinate to LL-diaminopimelate. In Prochlorococcus marinus (strain NATL1A), this protein is LL-diaminopimelate aminotransferase.